The sequence spans 610 residues: MSDVFDAKAFLKTVTSQPGVYRMYDAGGTVIYVGKAKDLKKRLSSYFRSNLASRKTEALVALIAQIDVTVTHTETEALLLEHNYIKLYQPRYNVLLRDDKSYPFIFLSGDTHPRLAMHRGAKHAKGEYFGPFPNGYAVRETLALLQKIFPVRQCENSVYRNRSRPCLQYQIGRCLGPCVAGLVSEEEYAQQVEYVRLFLAGKDDQVLTQLIARMEKASQSLEFEEAARIRDQIQAVRRVTEKQFVSNTGDDLDVIGVAFEAGMACVHVLFIRQGKVLGSRSYFPKVPGGTELGEVVETFVGQFYLQGSQMRTLPGEILLDFSLGDKTLLAESLSELAGRRINVQTKPRGDRARYLKLARTNAATALTTKLAQQSTIHQRLQALATVLELPAVKRMECFDISHTMGEQTVASCVVFDSNGPLRAEYRRYNITGITPGDDYAAMNQVLRRRYGKAIDENKIPDVILIDGGKGQLAQAKAVFAELDVPWDKHHPLLLGVAKGSDRKAGLETLFFEPEGEGFSLPPDSPALHVIQHIRDESHDHAISGHRKKRAKVKSTSSLETIEGVGPKRRQMLLKYMGGLQGLQQASVEEIAKVPGISHGLAEKIFYSLKH.

In terms of domain architecture, GIY-YIG spans 16-94 (SQPGVYRMYD…IKLYQPRYNV (79 aa)). The UVR domain occupies 204 to 239 (DQVLTQLIARMEKASQSLEFEEAARIRDQIQAVRRV). Positions 540–559 (HAISGHRKKRAKVKSTSSLE) are disordered. The segment covering 543–552 (SGHRKKRAKV) has biased composition (basic residues).

This sequence belongs to the UvrC family. In terms of assembly, interacts with UvrB in an incision complex.

Its subcellular location is the cytoplasm. Functionally, the UvrABC repair system catalyzes the recognition and processing of DNA lesions. UvrC both incises the 5' and 3' sides of the lesion. The N-terminal half is responsible for the 3' incision and the C-terminal half is responsible for the 5' incision. The protein is UvrABC system protein C of Klebsiella pneumoniae (strain 342).